Consider the following 366-residue polypeptide: Putative [LysW]-aminoadipate semialdehyde/glutamate semialdehyde transaminase (366 aa).

Pyridoxal 5'-phosphate is bound by residues 90 to 91 (GT) and Phe-117. Arg-120 lines the substrate pocket. Residue 202-205 (DEVQ) coordinates pyridoxal 5'-phosphate. Lys-230 is subject to N6-(pyridoxal phosphate)lysine. Ser-254 contributes to the substrate binding site. Thr-255 provides a ligand contact to pyridoxal 5'-phosphate.

It belongs to the class-III pyridoxal-phosphate-dependent aminotransferase family. LysJ subfamily. As to quaternary structure, homodimer. Requires pyridoxal 5'-phosphate as cofactor.

Its subcellular location is the cytoplasm. The catalysed reaction is [amino-group carrier protein]-C-terminal-gamma-(L-lysyl)-L-glutamate + 2-oxoglutarate = [amino-group carrier protein]-C-terminal-N-(1-carboxy-5-oxopentan-1-yl)-L-glutamine + L-glutamate. The enzyme catalyses [amino-group carrier protein]-C-terminal-gamma-(L-ornithyl)-L-glutamate + 2-oxoglutarate = [amino-group carrier protein]-C-terminal-gamma-(L-glutamyl-5-semialdehyde)-L-glutamate + L-glutamate. It functions in the pathway amino-acid biosynthesis; L-lysine biosynthesis via AAA pathway; L-lysine from L-alpha-aminoadipate (Thermus route): step 4/5. It participates in amino-acid biosynthesis; L-arginine biosynthesis. In terms of biological role, involved in both the arginine and lysine biosynthetic pathways. The protein is Putative [LysW]-aminoadipate semialdehyde/glutamate semialdehyde transaminase of Pyrococcus furiosus (strain ATCC 43587 / DSM 3638 / JCM 8422 / Vc1).